We begin with the raw amino-acid sequence, 297 residues long: Pantothenate synthetase (297 aa).

Residue 30–37 (MGYLHAGH) coordinates ATP. H37 acts as the Proton donor in catalysis. Q61 is a binding site for (R)-pantoate. Q61 provides a ligand contact to beta-alanine. 147–150 (GEKD) is a binding site for ATP. Residue Q153 participates in (R)-pantoate binding. Residues V176 and 184–187 (LSSR) contribute to the ATP site.

It belongs to the pantothenate synthetase family. In terms of assembly, homodimer.

Its subcellular location is the cytoplasm. It carries out the reaction (R)-pantoate + beta-alanine + ATP = (R)-pantothenate + AMP + diphosphate + H(+). Its pathway is cofactor biosynthesis; (R)-pantothenate biosynthesis; (R)-pantothenate from (R)-pantoate and beta-alanine: step 1/1. In terms of biological role, catalyzes the condensation of pantoate with beta-alanine in an ATP-dependent reaction via a pantoyl-adenylate intermediate. The polypeptide is Pantothenate synthetase (Rhizobium etli (strain ATCC 51251 / DSM 11541 / JCM 21823 / NBRC 15573 / CFN 42)).